The chain runs to 97 residues: Protein ParC (97 aa).

The chain is Protein ParC (parC) from Escherichia coli.